The primary structure comprises 130 residues: Small ribosomal subunit protein uS11 (130 aa).

Belongs to the universal ribosomal protein uS11 family. Part of the 30S ribosomal subunit. Interacts with proteins S7 and S18. Binds to IF-3.

Functionally, located on the platform of the 30S subunit, it bridges several disparate RNA helices of the 16S rRNA. Forms part of the Shine-Dalgarno cleft in the 70S ribosome. The sequence is that of Small ribosomal subunit protein uS11 from Psychrobacter sp. (strain PRwf-1).